Consider the following 319-residue polypeptide: Large ribosomal subunit protein uL29m (319 aa).

Residues 1–55 (MWKRSFHSQGGPLRARTKFTKPKPKQPVLPKDKIRPPTQLTHHSNNLRITEPIPP) form a disordered region. The segment covering 15–24 (ARTKFTKPKP) has biased composition (basic residues). Positions 38 to 48 (TQLTHHSNNLR) are enriched in polar residues.

This sequence belongs to the universal ribosomal protein uL29 family. As to quaternary structure, component of the mitochondrial large ribosomal subunit. Mature mitochondrial ribosomes consist of a small (37S) and a large (54S) subunit. The 37S subunit contains at least 33 different proteins and 1 molecule of RNA (15S). The 54S subunit contains at least 45 different proteins and 1 molecule of RNA (21S).

It is found in the mitochondrion. The sequence is that of Large ribosomal subunit protein uL29m (MRPL4) from Saccharomyces cerevisiae (strain YJM789) (Baker's yeast).